Reading from the N-terminus, the 99-residue chain is U1-theraphotoxin-Tal1a (99 aa).

Residues 1–22 (MNTIQVIIFAVVLVLTVTVGQA) form the signal peptide. A propeptide spanning residues 23–57 (DEDSAETSLLRKLKEAEASLFGQHLEESQHSREKR) is cleaved from the precursor. Disulfide bonds link C58/C73, C65/C78, and C72/C93. S98 is subject to Serine amide.

It belongs to the neurotoxin 14 (magi-1) family. 08 (Ltx-4) subfamily. In terms of tissue distribution, expressed by the venom gland.

Its subcellular location is the secreted. In terms of biological role, insecticidal toxin that shows strong lethal effects on American cockroaches (P.americana) and common mealbeetle (T.molitor). Possibly acts by blocking ion channel currents. Also shows significant analgesic effects in mice models of pain including abdominal writhing induced by acetic acid and formalin-induced paw licking tests. In addition, exerts marked inhibition of proliferation of some human tumor cell lines including C8166, Molt-4, A-549, BIU-87, T24, and Calu-6. The sequence is that of U1-theraphotoxin-Tal1a from Tliltocatl albopilosus (Curlyhair tarantula).